Reading from the N-terminus, the 66-residue chain is Nigrocin-2ISb (66 aa).

The signal sequence occupies residues 1–22; sequence MFTLKKSMLLLFFLGTINLSLC. A propeptide spans 23–43 (removed in mature form); that stretch reads QEERDAEEERRDEDNAKMEEI. A disulfide bridge links cysteine 60 with cysteine 66.

As to expression, expressed by the skin glands.

It localises to the secreted. Has antimicrobial activity against Gram-negative bacterium E.coli ATCC 8739 (MIC=50 ug), against Gram positive bacteria S.aureus ATCC 6538 (MIC=3.1 ug), methicillin-resistant S.aureus ATCC 43300 (MIC=12.5 ug), B.subtilis ATCC 6633 (MIC=12.5 ug) and against fungus C.albicans ATCC 90028 (MIC=50 ug). The protein is Nigrocin-2ISb of Odorrana ishikawae (Ishikawa's frog).